The primary structure comprises 1825 residues: Proteasome activator complex subunit 4B (1825 aa).

6 HEAT repeats span residues 458-502, 981-1020, 1162-1200, 1336-1374, 1618-1656, and 1662-1700; these read PEGP…LVDC, NFCC…NHCG, YPLP…QLKR, DAFL…GSKH, PEQI…YNLF, and EQCV…CNFL. The tract at residues 1632-1720 is bromodomain-like (BRDL); the sequence is AGSSSWHARY…EALCKTRLPK (89 aa).

It belongs to the BLM10 family. As to quaternary structure, homodimer. Interacts with the 20S and 26S proteasomes.

It is found in the cytoplasm. It localises to the cytosol. The protein localises to the nucleus. Its subcellular location is the nucleus speckle. In terms of biological role, associated component of the proteasome that specifically recognizes acetylated histones and promotes ATP- and ubiquitin-independent degradation of core histones during DNA damage response. Recognizes and binds acetylated histones via its bromodomain-like (BRDL) region and activates the proteasome by opening the gated channel for substrate entry. Binds to the core proteasome via its C-terminus, which occupies the same binding sites as the proteasomal ATPases, opening the closed structure of the proteasome via an active gating mechanism. involved in DNA damage response in somatic cells: binds to acetylated histones and promotes degradation of histones. The protein is Proteasome activator complex subunit 4B (psme4b) of Danio rerio (Zebrafish).